The primary structure comprises 25 residues: SMLSVLKNLGKVGLGLVACKINKQC.

Residues Cys-19 and Cys-25 are joined by a disulfide bond.

In terms of tissue distribution, expressed by the skin glands.

The protein localises to the secreted. Functionally, antibacterial activity against Gram-positive bacterium S.aureus (MIC=55 uM) and Gram-negative bacterium E.coli (MIC=1.5 uM). Has activity against C.albicans (MIC=58 uM). The polypeptide is Ranatuerin-1C (Lithobates clamitans (Green frog)).